A 422-amino-acid chain; its full sequence is Gamma-glutamyl phosphate reductase (422 aa).

This sequence belongs to the gamma-glutamyl phosphate reductase family.

Its subcellular location is the cytoplasm. It catalyses the reaction L-glutamate 5-semialdehyde + phosphate + NADP(+) = L-glutamyl 5-phosphate + NADPH + H(+). The protein operates within amino-acid biosynthesis; L-proline biosynthesis; L-glutamate 5-semialdehyde from L-glutamate: step 2/2. Catalyzes the NADPH-dependent reduction of L-glutamate 5-phosphate into L-glutamate 5-semialdehyde and phosphate. The product spontaneously undergoes cyclization to form 1-pyrroline-5-carboxylate. This chain is Gamma-glutamyl phosphate reductase, found in Saccharophagus degradans (strain 2-40 / ATCC 43961 / DSM 17024).